The sequence spans 422 residues: 5-hydroxytryptamine receptor 1A (422 aa).

Residues 1 to 23 are disordered; that stretch reads MDVLSPGQGNNTTSPPAPFETGG. The Extracellular segment spans residues 1 to 38; sequence MDVLSPGQGNNTTSPPAPFETGGNTTGISDVTFSYQVI. N-linked (GlcNAc...) asparagine glycosylation is found at N10, N11, and N24. The chain crosses the membrane as a helical span at residues 39–59; sequence TSLLLGTLIFCAVLGNACVVA. The Cytoplasmic portion of the chain corresponds to 60-73; it reads AIALERSLQNVANY. A helical transmembrane segment spans residues 74-98; sequence LIGSLAVTDLMVSVLVLPMAALYQV. Residues 99–107 are Extracellular-facing; sequence LNKWTLGQV. The chain crosses the membrane as a helical span at residues 108 to 132; the sequence is TCDLFIALDVLCCTSSILHLCAIAL. Residues C109 and C187 are joined by a disulfide bond. Serotonin is bound by residues D116 and C120. Residues 133–135 carry the DRY motif; important for ligand-induced conformation changes motif; that stretch reads DRY. Topologically, residues 133-152 are cytoplasmic; sequence DRYWAITDPIDYVNKRTPRR. The helical transmembrane segment at 153 to 174 threads the bilayer; it reads AAALISLTWLIGFLISIPPMLG. At 175 to 193 the chain is on the extracellular side; that stretch reads WRTPEDRSDPDACTISKDH. The helical transmembrane segment at 194 to 216 threads the bilayer; it reads GYTIYSTFGAFYIPLLLMLVLYG. The Cytoplasmic segment spans residues 217-346; the sequence is RIFRAARFRI…LARERKTVKT (130 aa). The segment at 235 to 262 is disordered; that stretch reads KTGADTRHGASPAPQPKKSVNGESGSRN. 1D-myo-inositol 4-phosphate contacts are provided by T314, K345, T346, and G352. The chain crosses the membrane as a helical span at residues 347-370; that stretch reads LGIIMGTFILCWLPFFIVALVLPF. Topologically, residues 371 to 378 are extracellular; sequence CESSCHMP. Residues 379-403 traverse the membrane as a helical segment; sequence TLLGAIINWLGYSNSLLNPVIYAYF. The NPxxY motif; important for ligand-induced conformation changes and signaling motif lies at 396-400; the sequence is NPVIY. 1D-myo-inositol 4-phosphate contacts are provided by F403, N404, and K405. Over 404 to 422 the chain is Cytoplasmic; sequence NKDFQNAFKKIIKCKFCRQ.

It belongs to the G-protein coupled receptor 1 family. 5-hydroxytryptamine receptor subfamily. HTR1A sub-subfamily. As to quaternary structure, heterodimer; heterodimerizes with GPER1. Interacts with YIF1B. Interacts with GPR39 and GALR1.

The protein resides in the cell membrane. It is found in the cell projection. It localises to the dendrite. G-protein coupled receptor activity is regulated by lipids: phosphatidylinositol 4-phosphate increases HTR1A-mediated activity. Its function is as follows. G-protein coupled receptor for 5-hydroxytryptamine (serotonin). Also functions as a receptor for various drugs and psychoactive substances. Ligand binding causes a conformation change that triggers signaling via guanine nucleotide-binding proteins (G proteins) and modulates the activity of downstream effectors, such as adenylate cyclase. HTR1A is coupled to G(i)/G(o) G alpha proteins and mediates inhibitory neurotransmission: signaling inhibits adenylate cyclase activity and activates a phosphatidylinositol-calcium second messenger system that regulates the release of Ca(2+) ions from intracellular stores. Beta-arrestin family members regulate signaling by mediating both receptor desensitization and resensitization processes. In Gorilla gorilla gorilla (Western lowland gorilla), this protein is 5-hydroxytryptamine receptor 1A (HTR1A).